A 302-amino-acid polypeptide reads, in one-letter code: tRNA dimethylallyltransferase (302 aa).

9–16 provides a ligand contact to ATP; that stretch reads GPTGSGKT. 11-16 lines the substrate pocket; sequence TGSGKT.

It belongs to the IPP transferase family. As to quaternary structure, monomer. It depends on Mg(2+) as a cofactor.

It catalyses the reaction adenosine(37) in tRNA + dimethylallyl diphosphate = N(6)-dimethylallyladenosine(37) in tRNA + diphosphate. Functionally, catalyzes the transfer of a dimethylallyl group onto the adenine at position 37 in tRNAs that read codons beginning with uridine, leading to the formation of N6-(dimethylallyl)adenosine (i(6)A). This is tRNA dimethylallyltransferase from Thermus thermophilus (strain ATCC BAA-163 / DSM 7039 / HB27).